We begin with the raw amino-acid sequence, 258 residues long: Tryptophan synthase alpha chain (258 aa).

Catalysis depends on proton acceptor residues Glu-47 and Asp-58.

It belongs to the TrpA family. Tetramer of two alpha and two beta chains.

It catalyses the reaction (1S,2R)-1-C-(indol-3-yl)glycerol 3-phosphate + L-serine = D-glyceraldehyde 3-phosphate + L-tryptophan + H2O. It participates in amino-acid biosynthesis; L-tryptophan biosynthesis; L-tryptophan from chorismate: step 5/5. Its function is as follows. The alpha subunit is responsible for the aldol cleavage of indoleglycerol phosphate to indole and glyceraldehyde 3-phosphate. This is Tryptophan synthase alpha chain from Bacillus cereus (strain B4264).